A 249-amino-acid polypeptide reads, in one-letter code: Protein obstructor-E (249 aa).

A signal peptide spans 1-21 (MAKILISALLCVAMFGSMALG). A Chitin-binding type-2 1 domain is found at 22–80 (SPECPTPNGRFASGDQCDSYTECQDGTPVEKLCPDGLLFHQRTKATGECTYAPYSTCKE). A disulfide bridge links Cys-54 with Cys-70. A glycan (N-linked (GlcNAc...) asparagine) is linked at Asn-88. 2 consecutive Chitin-binding type-2 domains span residues 90–148 (TEEC…SCNA) and 170–227 (VDVS…ECYA). 2 disulfides stabilise this stretch: Cys-124/Cys-137 and Cys-203/Cys-216.

As to expression, uniformly expressed throughout the cuticle of third instar larva.

It is found in the secreted. Its subcellular location is the extracellular space. The protein resides in the extracellular matrix. Chitin-binding protein that is important for the longitudinal contraction and lateral expansion of the larval cuticle during its conversion into the oval-shaped puparium case. Essential for survival to the second instar larval stage. Confers the orientated contractility and expandability of the larval cuticle by regulating the arrangement of chitin and the formation of supracellular ridges on the cuticle of third instar larvae. Essential for determining pupal body shape; required for the orientated shape change of the cuticle during metamorphosis which involves changes in the morphology of the supracellular ridges. Its function is as follows. Mainly involved in regulating pupal shape. In terms of biological role, mainly involved in larvae survival, possibly by maintaining the normal morphology of the larval hindgut during development. The protein is Protein obstructor-E of Drosophila melanogaster (Fruit fly).